The chain runs to 466 residues: Adenosylhomocysteinase (466 aa).

Substrate-binding residues include Thr-57, Asp-132, and Glu-192. Residue 193–195 participates in NAD(+) binding; sequence TTT. Residues Lys-222 and Asp-226 each coordinate substrate. Residues Asn-227, 256 to 261, Glu-279, Asn-314, 335 to 337, and Asn-380 each bind NAD(+); these read GYGDVG and IGH.

Belongs to the adenosylhomocysteinase family. The cofactor is NAD(+).

Its subcellular location is the cytoplasm. The catalysed reaction is S-adenosyl-L-homocysteine + H2O = L-homocysteine + adenosine. Its pathway is amino-acid biosynthesis; L-homocysteine biosynthesis; L-homocysteine from S-adenosyl-L-homocysteine: step 1/1. In terms of biological role, may play a key role in the regulation of the intracellular concentration of adenosylhomocysteine. In Rhizobium etli (strain CIAT 652), this protein is Adenosylhomocysteinase.